The sequence spans 164 residues: MAENGAAEGTAQQPQVQMNILGQFIRDLSFENVMAQKGVGGEVQPDVNVQVALDAKKRSTENQYEVITKLNIESKNKAGGEVLFVLELEYVGIFNIAGVPEDQLHPFLLIECPRMLFPFLRRIVSDISRDGGFPPLNLDNIDFVAIYRNELARRQAEAPAEVTN.

Belongs to the SecB family. As to quaternary structure, homotetramer, a dimer of dimers. One homotetramer interacts with 1 SecA dimer.

The protein resides in the cytoplasm. Its function is as follows. One of the proteins required for the normal export of preproteins out of the cell cytoplasm. It is a molecular chaperone that binds to a subset of precursor proteins, maintaining them in a translocation-competent state. It also specifically binds to its receptor SecA. The polypeptide is Protein-export protein SecB (Ruegeria sp. (strain TM1040) (Silicibacter sp.)).